Reading from the N-terminus, the 471-residue chain is ATP synthase subunit beta (471 aa).

Position 156–163 (156–163 (GGAGVGKT)) interacts with ATP.

Belongs to the ATPase alpha/beta chains family. F-type ATPases have 2 components, CF(1) - the catalytic core - and CF(0) - the membrane proton channel. CF(1) has five subunits: alpha(3), beta(3), gamma(1), delta(1), epsilon(1). CF(0) has three main subunits: a(1), b(2) and c(9-12). The alpha and beta chains form an alternating ring which encloses part of the gamma chain. CF(1) is attached to CF(0) by a central stalk formed by the gamma and epsilon chains, while a peripheral stalk is formed by the delta and b chains.

The protein localises to the cell membrane. It carries out the reaction ATP + H2O + 4 H(+)(in) = ADP + phosphate + 5 H(+)(out). Produces ATP from ADP in the presence of a proton gradient across the membrane. The catalytic sites are hosted primarily by the beta subunits. The sequence is that of ATP synthase subunit beta from Lawsonia intracellularis (strain PHE/MN1-00).